The primary structure comprises 349 residues: Pinopsin (349 aa).

Residues 1-16 (MDPTNSPQEPPHTSTP) show a composition bias toward polar residues. A disordered region spans residues 1 to 22 (MDPTNSPQEPPHTSTPGPFDGP). Residues 1–32 (MDPTNSPQEPPHTSTPGPFDGPQWPHQAPRGM) lie on the Extracellular side of the membrane. Residues 33-57 (YLSVAVLMGIVVISASVVNGLVIVV) traverse the membrane as a helical segment. Residues 58 to 69 (SIRYKKLRSPLN) are Cytoplasmic-facing. The chain crosses the membrane as a helical span at residues 70-94 (YILVNLAMADLLVTLCGSSVSFSNN). Over 95–109 (INGFFVFGKRLCELE) the chain is Extracellular. Cysteines 106 and 183 form a disulfide. The chain crosses the membrane as a helical span at residues 110-129 (GFMVSLTGIVGLWSLAILAL). At 130–148 (ERYVVVCRPLGDFRFQHRH) the chain is on the cytoplasmic side. The chain crosses the membrane as a helical span at residues 149–172 (AVTGCAFTWVWSLLWTTPPLLGWS). Residues 173 to 196 (SYVPEGLRTSCGPNWYTGGSNNNS) lie on the Extracellular side of the membrane. The N-linked (GlcNAc...) asparagine glycan is linked to asparagine 194. Residues 197-224 (YILTLFVTCFVMPLSLILFSYANLLMTL) traverse the membrane as a helical segment. The Cytoplasmic portion of the chain corresponds to 225-246 (RAAAAQQQESDTTQQAERQVTR). The chain crosses the membrane as a helical span at residues 247 to 270 (MVVAMVMAFLICWLPYTTFALVVA). The Extracellular portion of the chain corresponds to 271-278 (TNKDIAIQ). The helical transmembrane segment at 279 to 303 (PALASLPSYFSKTATVYNPIIYVFM) threads the bilayer. N6-(retinylidene)lysine is present on lysine 290. Over 304-349 (NKQFQSCLLKMLCCGHHPRGTGRTAPAAPASPTDGLRNKVTPSHPV) the chain is Cytoplasmic. 2 S-palmitoyl cysteine lipidation sites follow: cysteine 316 and cysteine 317. The interval 325-349 (GRTAPAAPASPTDGLRNKVTPSHPV) is disordered.

It belongs to the G-protein coupled receptor 1 family. Opsin subfamily. In terms of processing, phosphorylated on some or all of the serine and threonine residues present in the C-terminal region. As to expression, pineal gland.

It is found in the membrane. Its function is as follows. Produces a slow and prolonged phototransduction response consistent with the non-visual function of pineal photoreception. The sequence is that of Pinopsin from Columba livia (Rock dove).